Reading from the N-terminus, the 89-residue chain is Arminin 7519 (89 aa).

An N-terminal signal peptide occupies residues 1–18 (MRSTFAVLFLALIALTYS). A propeptide spanning residues 19-59 (KNYQDVKEEIKNEVENEILRDLGEDDDELDDNAQEAVNDAR) is cleaved from the precursor. Ala-86 is modified (alanine amide).

The protein belongs to the arminin family. Expressed in entodermal epithelium along the body column.

It localises to the secreted. Its subcellular location is the target cell membrane. Its function is as follows. Antimicrobial peptide with a broad-spectrum antimicrobial activity. Keeps its antibacterial activity under a wide range of salt concentrations that mimic physiological conditions of human blood, which is surprising, since Hydra is an obligate freshwater animal with nearly no salt tolerance. Does not affect red blood cells. This chain is Arminin 7519, found in Hydra vulgaris (Hydra).